The primary structure comprises 160 residues: Large ribosomal subunit protein uL15 (160 aa).

Over residues 1–11 (MKLNELRDNHG) the composition is skewed to basic and acidic residues. Residues 1 to 39 (MKLNELRDNHGARPKSKRLGRGIGSGKGKTSGKGVKGQK) form a disordered region. The segment covering 21–35 (RGIGSGKGKTSGKGV) has biased composition (gly residues).

It belongs to the universal ribosomal protein uL15 family. As to quaternary structure, part of the 50S ribosomal subunit.

In terms of biological role, binds to the 23S rRNA. This Granulibacter bethesdensis (strain ATCC BAA-1260 / CGDNIH1) protein is Large ribosomal subunit protein uL15.